An 828-amino-acid polypeptide reads, in one-letter code: Sarcolemmal membrane-associated protein (828 aa).

Positions 1–163 (MPSALAIFTC…AANTPSMYSQ (163 aa)) are necessary for targeting to centrosomes. Topologically, residues 1–802 (MPSALAIFTC…REKGNNKPWP (802 aa)) are cytoplasmic. In terms of domain architecture, FHA spans 28-85 (IKIGRSVARCRPAQNNATFDCKVLSRNHALVWFDHKTGKFYLQDTKSSNGTFINSQRL). Ser-148 carries the post-translational modification Phosphoserine. Coiled-coil stretches lie at residues 167-202 (QLSQ…ASDT) and 230-388 (NQTE…QEKT). Residues 339-359 (KKELQHKIDEMEEKEQELQAK) form a helical; Anchor for type IV membrane protein membrane-spanning segment. The segment covering 433–446 (KLSKENQTRAKESD) has biased composition (basic and acidic residues). The segment at 433–467 (KLSKENQTRAKESDFSDTLSPSKEKSSDDTTDAQM) is disordered. Phosphoserine occurs at positions 448 and 452. The stretch at 477-799 (AKVSLLKDDL…KLLREKGNNK (323 aa)) forms a coiled coil. Residues 803–823 (WMPMLAALVAVTAIVLYVPGL) traverse the membrane as a helical; Anchor for type IV membrane protein segment. Residues 824-828 (ARASP) are Extracellular-facing.

Belongs to the SLMAP family. Homodimer. Interacts with myosin. Interacts with SIKE1 and both associate with the STRIPAK core complex composed of PP2A catalytic and scaffolding subunits, the striatins (PP2A regulatory subunits), the striatin-associated proteins MOB4, STRIP1 and STRIP2, PDCD10 and members of the STE20 kinases, such as STK24 and STK26. Interacts (via FHA domain) with STK3 (when phosphorylated); the interaction associates STK3 with the STRIPAK complex.

It localises to the cell membrane. Its subcellular location is the sarcolemma. The protein resides in the cytoplasm. The protein localises to the myofibril. It is found in the sarcomere. It localises to the m line. Its subcellular location is the z line. The protein resides in the cytoskeleton. The protein localises to the microtubule organizing center. It is found in the centrosome. It localises to the endoplasmic reticulum membrane. Its subcellular location is the mitochondrion membrane. Functionally, associates with the striatin-interacting phosphatase and kinase (STRIPAK) core complex, forming the extended (SIKE1:SLMAP)STRIPAK complex. The (SIKE1:SLMAP)STRIPAK complex dephosphorylates STK3 leading to the inhibition of Hippo signaling and the control of cell growth. May play a role during myoblast fusion. This Homo sapiens (Human) protein is Sarcolemmal membrane-associated protein.